Reading from the N-terminus, the 351-residue chain is 1-acylglycerol-3-phosphate O-acyltransferase ABHD5 (351 aa).

In terms of domain architecture, AB hydrolase-1 spans 79–184; the sequence is PLVLLHGFGG…LILVEPWGFP (106 aa). At Ser124 the chain carries Phosphoserine. Positions 329 to 334 match the HXXXXD motif motif; sequence HYVYAD.

This sequence belongs to the peptidase S33 family. ABHD4/ABHD5 subfamily. Interacts with ADRP and PLIN. Interacts with PNPLA2. Interacts with PLIN5; promotes interaction with PNPLA2.

The protein localises to the cytoplasm. The protein resides in the lipid droplet. The catalysed reaction is a 1-acyl-sn-glycero-3-phosphate + an acyl-CoA = a 1,2-diacyl-sn-glycero-3-phosphate + CoA. It carries out the reaction 1-(9Z-octadecenoyl)-sn-glycero-3-phosphate + (9Z)-octadecenoyl-CoA = 1,2-di-(9Z-octadecenoyl)-sn-glycero-3-phosphate + CoA. The enzyme catalyses 1-(9Z-octadecenoyl)-sn-glycero-3-phosphate + hexadecanoyl-CoA = 1-(9Z)-octadecenoyl-2-hexadecanoyl-sn-glycero-3-phosphate + CoA. It catalyses the reaction 1-(9Z-octadecenoyl)-sn-glycero-3-phosphate + octadecanoyl-CoA = 1-(9Z-octadecenoyl)-2-octadecanoyl-sn-glycero-3-phosphate + CoA. The catalysed reaction is 1-(9Z-octadecenoyl)-sn-glycero-3-phosphate + (5Z,8Z,11Z,14Z)-eicosatetraenoyl-CoA = 1-(9Z)-octadecenoyl-2-(5Z,8Z,11Z,14Z)-eicosatetraenoyl-sn-glycero-3-phosphate + CoA. It carries out the reaction eicosanoyl-CoA + 1-(9Z-octadecenoyl)-sn-glycero-3-phosphate = 1-(9Z)-octadecenoyl-2-eicosanoyl-sn-glycero-3-phosphate + CoA. The enzyme catalyses 1-hexadecanoyl-sn-glycero-3-phosphate + (9Z)-octadecenoyl-CoA = 1-hexadecanoyl-2-(9Z-octadecenoyl)-sn-glycero-3-phosphate + CoA. It catalyses the reaction 1-octadecanoyl-sn-glycero-3-phosphate + (9Z)-octadecenoyl-CoA = 1-octadecanoyl-2-(9Z-octadecenoyl)-sn-glycero-3-phosphate + CoA. The catalysed reaction is 1-(5Z,8Z,11Z,14Z-eicosatetraenoyl)-sn-glycero-3-phosphate + (9Z)-octadecenoyl-CoA = 1-(5Z,8Z,11Z,14Z)-eicosatetraenoyl-2-(9Z)-octadecenoyl-sn-glycero-3-phosphate + CoA. Its activity is regulated as follows. Acyltransferase activity is inhibited by detergents such as Triton X-100 and 3-[(3-cholamidopropyl)dimethylammonio]-1-propanesulfonate (CHAPS). Acyltransferase activity is inhibited by the presence of magnesium and calcium. Its function is as follows. Coenzyme A-dependent lysophosphatidic acid acyltransferase that catalyzes the transfer of an acyl group on a lysophosphatidic acid. Functions preferentially with 1-oleoyl-lysophosphatidic acid followed by 1-palmitoyl-lysophosphatidic acid, 1-stearoyl-lysophosphatidic acid and 1-arachidonoyl-lysophosphatidic acid as lipid acceptor. Functions preferentially with arachidonoyl-CoA followed by oleoyl-CoA as acyl group donors. Functions in phosphatidic acid biosynthesis. May regulate the cellular storage of triacylglycerol through activation of the phospholipase PNPLA2. Involved in keratinocyte differentiation. Regulates lipid droplet fusion. This Rattus norvegicus (Rat) protein is 1-acylglycerol-3-phosphate O-acyltransferase ABHD5.